A 163-amino-acid polypeptide reads, in one-letter code: Nucleotide-binding protein BPUM_1028 (163 aa).

It belongs to the YajQ family.

Its function is as follows. Nucleotide-binding protein. This chain is Nucleotide-binding protein BPUM_1028, found in Bacillus pumilus (strain SAFR-032).